The sequence spans 99 residues: Protein RnfH (99 aa).

It belongs to the UPF0125 (RnfH) family.

This is Protein RnfH from Buchnera aphidicola subsp. Acyrthosiphon pisum (strain 5A).